Reading from the N-terminus, the 83-residue chain is Small ribosomal subunit protein uS17 (83 aa).

The protein belongs to the universal ribosomal protein uS17 family. Part of the 30S ribosomal subunit.

One of the primary rRNA binding proteins, it binds specifically to the 5'-end of 16S ribosomal RNA. This chain is Small ribosomal subunit protein uS17, found in Campylobacter concisus (strain 13826).